The primary structure comprises 421 residues: uncharacterized protein (421 aa).

CBS domains follow at residues Met-13–Leu-74, Leu-74–Thr-133, Met-139–Lys-195, and Met-217–Met-274.

This is an uncharacterized protein from Methanocaldococcus jannaschii (strain ATCC 43067 / DSM 2661 / JAL-1 / JCM 10045 / NBRC 100440) (Methanococcus jannaschii).